An 89-amino-acid chain; its full sequence is Small ribosomal subunit protein uS14A (89 aa).

This sequence belongs to the universal ribosomal protein uS14 family. Part of the 30S ribosomal subunit. Contacts proteins S3 and S10.

Its function is as follows. Binds 16S rRNA, required for the assembly of 30S particles and may also be responsible for determining the conformation of the 16S rRNA at the A site. This is Small ribosomal subunit protein uS14A from Lactiplantibacillus plantarum (strain ATCC BAA-793 / NCIMB 8826 / WCFS1) (Lactobacillus plantarum).